The following is a 661-amino-acid chain: Hemocyanin C chain (661 aa).

A disulfide bridge links cysteine 3 with cysteine 557. Cu cation contacts are provided by histidine 200, histidine 204, histidine 230, histidine 350, histidine 354, and histidine 390. Asparagine 476 carries N-linked (GlcNAc...) asparagine glycosylation.

The protein belongs to the tyrosinase family. Hemocyanin subfamily. In terms of assembly, hexamer of a number of different chains, of which A, B, and C have been identified. As to expression, hemolymph.

Its subcellular location is the secreted. It localises to the extracellular space. In terms of biological role, hemocyanins are copper-containing oxygen carriers occurring freely dissolved in the hemolymph of many mollusks and arthropods. The chain is Hemocyanin C chain from Panulirus interruptus (California spiny lobster).